Reading from the N-terminus, the 474-residue chain is Sporulation-specific protein 6 (474 aa).

The BRCT domain maps to 125-178 (RLAFPNFIFYFDNVDEEIKRRVTQKINNLGAKVATLFTFEVTHFITTRTTDPEM). The segment at 421 to 470 (IETKSGYCENCCERYKDLERHLGGKHHRRFAEKDENFQGLDDLFLLIRRP) adopts a DBF4-type zinc-finger fold. Positions 428, 431, 441, and 447 each coordinate Zn(2+).

It localises to the nucleus. In terms of biological role, may act as a kinase regulator. Essential for progression of meiosis II and sporulation. The sequence is that of Sporulation-specific protein 6 (spo6) from Schizosaccharomyces pombe (strain 972 / ATCC 24843) (Fission yeast).